Reading from the N-terminus, the 440-residue chain is Transposon Ty1-NL2 Gag polyprotein (440 aa).

4 stretches are compositionally biased toward polar residues: residues 1–23 (MESQQLSQHSPISHGSACASVTS), 48–60 (TKANSQQTTTPAS), 71–97 (SPQTAQSHSPQNGPYPQQCMMTQNQAN), and 129–152 (QFPQYPSSVGTPLSTPSPESGNTF). Disordered regions lie at residues 1–97 (MESQ…NQAN), 129–171 (QFPQ…YVRP), and 352–440 (GSRN…PETY). Residues 153–165 (TDSSSADSDMTST) show a composition bias toward low complexity. The segment at 299–401 (NNGIHINNKV…NSKSKTARAH (103 aa)) is RNA-binding. A compositionally biased stretch (low complexity) spans 402-418 (NVSTSNNSPSTDNDSIS). At Ser416 the chain carries Phosphoserine. Positions 419–428 (KSTTEPIQLN) are enriched in polar residues. Residues 429–440 (NKHDLHLRPETY) are compositionally biased toward basic and acidic residues.

In terms of assembly, homotrimer.

The protein localises to the cytoplasm. Functionally, capsid protein (CA) is the structural component of the virus-like particle (VLP), forming the shell that encapsulates the retrotransposons dimeric RNA genome. The particles are assembled from trimer-clustered units and there are holes in the capsid shells that allow for the diffusion of macromolecules. CA also has nucleocapsid-like chaperone activity, promoting primer tRNA(i)-Met annealing to the multipartite primer-binding site (PBS), dimerization of Ty1 RNA and initiation of reverse transcription. The sequence is that of Transposon Ty1-NL2 Gag polyprotein (TY1A-NL2) from Saccharomyces cerevisiae (strain ATCC 204508 / S288c) (Baker's yeast).